A 490-amino-acid polypeptide reads, in one-letter code: Probable cytosol aminopeptidase (490 aa).

Mn(2+)-binding residues include K262 and D267. K274 is an active-site residue. D285, D344, and E346 together coordinate Mn(2+). R348 is a catalytic residue.

The protein belongs to the peptidase M17 family. Mn(2+) is required as a cofactor.

The protein resides in the cytoplasm. The catalysed reaction is Release of an N-terminal amino acid, Xaa-|-Yaa-, in which Xaa is preferably Leu, but may be other amino acids including Pro although not Arg or Lys, and Yaa may be Pro. Amino acid amides and methyl esters are also readily hydrolyzed, but rates on arylamides are exceedingly low.. The enzyme catalyses Release of an N-terminal amino acid, preferentially leucine, but not glutamic or aspartic acids.. Presumably involved in the processing and regular turnover of intracellular proteins. Catalyzes the removal of unsubstituted N-terminal amino acids from various peptides. The protein is Probable cytosol aminopeptidase of Xanthomonas oryzae pv. oryzae (strain MAFF 311018).